We begin with the raw amino-acid sequence, 255 residues long: 5'-nucleotidase SurE (255 aa).

4 residues coordinate a divalent metal cation: Asp-8, Asp-9, Ser-40, and Asn-93.

Belongs to the SurE nucleotidase family. A divalent metal cation is required as a cofactor.

Its subcellular location is the cytoplasm. The enzyme catalyses a ribonucleoside 5'-phosphate + H2O = a ribonucleoside + phosphate. Nucleotidase that shows phosphatase activity on nucleoside 5'-monophosphates. The polypeptide is 5'-nucleotidase SurE (Rhodopseudomonas palustris (strain BisA53)).